The chain runs to 252 residues: tRNA (guanine-N(1)-)-methyltransferase (252 aa).

Residues Gly113 and Ile133–Leu138 contribute to the S-adenosyl-L-methionine site.

The protein belongs to the RNA methyltransferase TrmD family. As to quaternary structure, homodimer.

Its subcellular location is the cytoplasm. The catalysed reaction is guanosine(37) in tRNA + S-adenosyl-L-methionine = N(1)-methylguanosine(37) in tRNA + S-adenosyl-L-homocysteine + H(+). Specifically methylates guanosine-37 in various tRNAs. The protein is tRNA (guanine-N(1)-)-methyltransferase of Nitrosococcus oceani (strain ATCC 19707 / BCRC 17464 / JCM 30415 / NCIMB 11848 / C-107).